The primary structure comprises 507 residues: Cytochrome c-type protein ImcH (507 aa).

The next 3 membrane-spanning stretches (helical) occupy residues 14-34 (ISLI…AFIA), 45-65 (YIGL…LILV), and 100-120 (LFIF…VASI). Residues Cys132, Cys136, Met140, His152, Cys157, Cys160, His161, Asp400, Cys449, Cys452, His453, Cys487, Cys490, His491, and Glu496 each coordinate heme.

This sequence belongs to the NapC/NirT/NrfH family. Post-translationally, binds 4 heme c groups covalently per subunit.

It localises to the cell inner membrane. Redox protein involved in a high-potential metal respiratory pathway. Is required only for electron transfer to terminal extracellular electron acceptors with redox potentials higher than -0.1 V. ImcH likely transfers electrons from the quinone pool to a periplasmic acceptor. This chain is Cytochrome c-type protein ImcH, found in Geobacter sulfurreducens (strain ATCC 51573 / DSM 12127 / PCA).